Consider the following 186-residue polypeptide: Sec-independent protein translocase protein TatB (186 aa).

A helical transmembrane segment spans residues 1–21; it reads MFDIGFSELILLMVLGLVVLG. The disordered stretch occupies residues 162–186; that stretch reads LSSYYPPDDIEIAPASKSQSSKTKS. The span at 177 to 186 shows a compositional bias: polar residues; sequence SKSQSSKTKS.

Belongs to the TatB family. In terms of assembly, the Tat system comprises two distinct complexes: a TatABC complex, containing multiple copies of TatA, TatB and TatC subunits, and a separate TatA complex, containing only TatA subunits. Substrates initially bind to the TatABC complex, which probably triggers association of the separate TatA complex to form the active translocon.

The protein localises to the cell inner membrane. Part of the twin-arginine translocation (Tat) system that transports large folded proteins containing a characteristic twin-arginine motif in their signal peptide across membranes. Together with TatC, TatB is part of a receptor directly interacting with Tat signal peptides. TatB may form an oligomeric binding site that transiently accommodates folded Tat precursor proteins before their translocation. The chain is Sec-independent protein translocase protein TatB from Haemophilus influenzae (strain 86-028NP).